The following is a 120-amino-acid chain: 5-hydroxyisourate hydrolase 2 (120 aa).

His-10, Arg-48, and Tyr-117 together coordinate substrate.

This sequence belongs to the transthyretin family. 5-hydroxyisourate hydrolase subfamily. In terms of assembly, homotetramer.

The catalysed reaction is 5-hydroxyisourate + H2O = 5-hydroxy-2-oxo-4-ureido-2,5-dihydro-1H-imidazole-5-carboxylate + H(+). Catalyzes the hydrolysis of 5-hydroxyisourate (HIU) to 2-oxo-4-hydroxy-4-carboxy-5-ureidoimidazoline (OHCU). In Rhizobium meliloti (strain 1021) (Ensifer meliloti), this protein is 5-hydroxyisourate hydrolase 2.